Reading from the N-terminus, the 73-residue chain is uncharacterized protein (73 aa).

The protein belongs to the asfivirus DP63R family.

This is an uncharacterized protein from Ornithodoros (relapsing fever ticks).